Here is a 395-residue protein sequence, read N- to C-terminus: LIM/homeobox protein Lhx3 (395 aa).

LIM zinc-binding domains follow at residues 28-78 (CAGC…CKED) and 87-141 (CAAC…CKAD). The homeobox DNA-binding region spans 154-213 (AKRPRTTITAKQLETLKNAYNNSPKPARHVREQLSSETGLDMRVVQVWFQNRRAKEKRLK). Disordered stretches follow at residues 209–325 (EKRL…LQAL) and 348–395 (GGQG…HAQF). A compositionally biased stretch (polar residues) spans 257–276 (DEPSMSEMSHSNGIYSNLSE).

The protein localises to the nucleus. Transcription factor. Defines subclasses of motoneurons that segregate into columns in the spinal cord and select distinct axon pathways. Acts in conjunction with LIM-1, ISL-1 and ISL-2. This chain is LIM/homeobox protein Lhx3 (LHX3), found in Gallus gallus (Chicken).